Here is a 455-residue protein sequence, read N- to C-terminus: tRNA modification GTPase MnmE (455 aa).

(6S)-5-formyl-5,6,7,8-tetrahydrofolate-binding residues include arginine 24, glutamate 81, and lysine 120. Positions 216 to 378 (GMTVVIAGRP…LREHLKACMG (163 aa)) constitute a TrmE-type G domain. Asparagine 226 contacts K(+). Residues 226–231 (NAGKSS), 245–251 (TDIAGTT), 270–273 (DTAG), 335–338 (NKAD), and 359–361 (SAR) each bind GTP. Residue serine 230 participates in Mg(2+) binding. Residues threonine 245, isoleucine 247, and threonine 250 each coordinate K(+). Mg(2+) is bound at residue threonine 251. Lysine 455 lines the (6S)-5-formyl-5,6,7,8-tetrahydrofolate pocket.

The protein belongs to the TRAFAC class TrmE-Era-EngA-EngB-Septin-like GTPase superfamily. TrmE GTPase family. In terms of assembly, homodimer. Heterotetramer of two MnmE and two MnmG subunits. K(+) is required as a cofactor.

Its subcellular location is the cytoplasm. Its function is as follows. Exhibits a very high intrinsic GTPase hydrolysis rate. Involved in the addition of a carboxymethylaminomethyl (cmnm) group at the wobble position (U34) of certain tRNAs, forming tRNA-cmnm(5)s(2)U34. This chain is tRNA modification GTPase MnmE, found in Pseudomonas aeruginosa (strain ATCC 15692 / DSM 22644 / CIP 104116 / JCM 14847 / LMG 12228 / 1C / PRS 101 / PAO1).